We begin with the raw amino-acid sequence, 834 residues long: DNA polymerase I, thermostable (834 aa).

The region spanning 176-262 (RPEQWVDFRA…DLPLEVDLAQ (87 aa)) is the 5'-3' exonuclease domain. The polymerase stretch occupies residues 412 to 834 (ERLHRNLLKR…MGEDWLSAKG (423 aa)).

This sequence belongs to the DNA polymerase type-A family.

It catalyses the reaction DNA(n) + a 2'-deoxyribonucleoside 5'-triphosphate = DNA(n+1) + diphosphate. Functionally, in addition to polymerase activity, this DNA polymerase exhibits 5'-3' exonuclease activity. The sequence is that of DNA polymerase I, thermostable (polA) from Thermus thermophilus (strain ATCC 27634 / DSM 579 / HB8).